The following is a 103-amino-acid chain: Small ribosomal subunit protein uS10 (103 aa).

This sequence belongs to the universal ribosomal protein uS10 family. In terms of assembly, part of the 30S ribosomal subunit.

Functionally, involved in the binding of tRNA to the ribosomes. This chain is Small ribosomal subunit protein uS10, found in Pseudoalteromonas atlantica (strain T6c / ATCC BAA-1087).